Here is a 421-residue protein sequence, read N- to C-terminus: 5-hydroxytryptamine receptor 1A (421 aa).

At M1–I38 the chain is on the extracellular side. 4 N-linked (GlcNAc...) asparagine glycosylation sites follow: N10, N11, N24, and N30. The helical transmembrane segment at T39–A59 threads the bilayer. Over A60–Y73 the chain is Cytoplasmic. The helical transmembrane segment at L74–V98 threads the bilayer. Residues L99–V107 are Extracellular-facing. Residues T108–L132 traverse the membrane as a helical segment. C109 and C187 form a disulfide bridge. Residues D116 and C120 each contribute to the serotonin site. The short motif at D133–Y135 is the DRY motif; important for ligand-induced conformation changes element. The Cytoplasmic portion of the chain corresponds to D133 to R152. A helical transmembrane segment spans residues A153–G174. Topologically, residues W175 to H193 are extracellular. Residues G194–G216 form a helical membrane-spanning segment. The Cytoplasmic portion of the chain corresponds to R217 to T346. Positions G237–E268 are disordered. 1D-myo-inositol 4-phosphate-binding residues include T314, K345, T346, and G352. A helical transmembrane segment spans residues L347–F370. The Extracellular portion of the chain corresponds to C371 to P378. Residues E379–F403 traverse the membrane as a helical segment. Positions N396–Y400 match the NPxxY motif; important for ligand-induced conformation changes and signaling motif. Positions 403, 404, and 405 each coordinate 1D-myo-inositol 4-phosphate. Topologically, residues N404–R421 are cytoplasmic.

This sequence belongs to the G-protein coupled receptor 1 family. 5-hydroxytryptamine receptor subfamily. HTR1A sub-subfamily. In terms of assembly, heterodimer; heterodimerizes with GPER1. Interacts with YIF1B. Interacts with GPR39 and GALR1. In terms of tissue distribution, most abundantly expressed in midbrain, in dorsal raphe and hippocampus. Detected at lower levels in amygdala and brain cortex.

The protein localises to the cell membrane. It localises to the cell projection. It is found in the dendrite. With respect to regulation, G-protein coupled receptor activity is regulated by lipids: phosphatidylinositol 4-phosphate increases HTR1A-mediated activity. Plays a role in the regulation of dopamine and 5-hydroxytryptamine levels in the brain, and thereby affects neural activity, mood and behavior. Plays a role in the response to anxiogenic stimuli. In terms of biological role, G-protein coupled receptor for 5-hydroxytryptamine (serotonin). Also functions as a receptor for various drugs and psychoactive substances. Ligand binding causes a conformation change that triggers signaling via guanine nucleotide-binding proteins (G proteins) and modulates the activity of downstream effectors, such as adenylate cyclase. HTR1A is coupled to G(i)/G(o) G alpha proteins and mediates inhibitory neurotransmission: signaling inhibits adenylate cyclase activity and activates a phosphatidylinositol-calcium second messenger system that regulates the release of Ca(2+) ions from intracellular stores. Beta-arrestin family members regulate signaling by mediating both receptor desensitization and resensitization processes. The protein is 5-hydroxytryptamine receptor 1A (Htr1a) of Mus musculus (Mouse).